The chain runs to 80 residues: Omega-conotoxin-like 2/7 (80 aa).

Residues 1–22 (MKLTCMMIVAVMFLTASIFITA) form the signal peptide. A propeptide spanning residues 23–51 (DNSRNGIENLPRMRRHEMKKPKASKLNKR) is cleaved from the precursor. Cystine bridges form between Cys-53–Cys-71, Cys-60–Cys-75, and Cys-70–Cys-79.

It belongs to the conotoxin O1 superfamily. In terms of tissue distribution, expressed by the venom duct.

Its subcellular location is the secreted. In terms of biological role, omega-conotoxins act at presynaptic membranes, they bind and block voltage-gated calcium channels (Cav). The sequence is that of Omega-conotoxin-like 2/7 from Conus imperialis (Imperial cone).